We begin with the raw amino-acid sequence, 248 residues long: Enolase-phosphatase E1 (248 aa).

Residues D14 and E16 each contribute to the Mg(2+) site. Residues 145–146 (SS) and K179 each bind substrate. D204 provides a ligand contact to Mg(2+).

It belongs to the HAD-like hydrolase superfamily. MasA/MtnC family. As to quaternary structure, monomer. Mg(2+) is required as a cofactor.

It localises to the cytoplasm. It is found in the nucleus. The enzyme catalyses 5-methylsulfanyl-2,3-dioxopentyl phosphate + H2O = 1,2-dihydroxy-5-(methylsulfanyl)pent-1-en-3-one + phosphate. It participates in amino-acid biosynthesis; L-methionine biosynthesis via salvage pathway; L-methionine from S-methyl-5-thio-alpha-D-ribose 1-phosphate: step 3/6. The protein operates within amino-acid biosynthesis; L-methionine biosynthesis via salvage pathway; L-methionine from S-methyl-5-thio-alpha-D-ribose 1-phosphate: step 4/6. Functionally, bifunctional enzyme that catalyzes the enolization of 2,3-diketo-5-methylthiopentyl-1-phosphate (DK-MTP-1-P) into the intermediate 2-hydroxy-3-keto-5-methylthiopentenyl-1-phosphate (HK-MTPenyl-1-P), which is then dephosphorylated to form the acireductone 1,2-dihydroxy-3-keto-5-methylthiopentene (DHK-MTPene). The sequence is that of Enolase-phosphatase E1 from Caenorhabditis elegans.